The primary structure comprises 601 residues: Leucine-rich repeat-containing protein 40 (601 aa).

LRR repeat units lie at residues 33–56, 79–101, 102–124, 125–148, 150–170, 171–193, 194–217, 219–239, 240–264, 266–285, 286–308, 309–334, 336–355, 397–420, 423–446, 447–469, 470–492, 493–516, 518–539, 540–563, and 565–586; these read ARKSGQLNLSGRGLTEVPASVWRL, QTDLTKLLLSSNKLQSIPDDVKL, LPALVVLDIHDNQLSSLPDSIGD, LEQLQKLILSHNKLTELPSGVWRL, NLRCLHLQQNLIEQIPRDLGQ, LVNLDELDLSNNHLIDIPESLAN, LQNLVKLDLSCNKLKSLPPAISQM, NLRMLDCSRNQMESIPPVLAQ, MESLEQLYLRHNKLRYLPELPCCKT, KELHCGNNQIEVLEAEHLKH, LNALSLLELRDNKVKSLPEEITL, LQGLERLDLTNNDISSLPCGLGTLPK, KSLSLEGNPLRAIRRDLLTK, IKTLKTLDYSEKQDATIPDDVFDA, GNPVANVNFSKNQLTAVPHRIVDL, KDSLADINLGFNKLTTIPADFCH, LKQLMHIDLRNNLLISLPMELEG, LIKLRSVILSFNRFKSFPEVLYRI, SLETILISSNQVGGIDAVQMKT, LSRLSTLDLSNNDIMQVPPELGNC, and SLRALMLDGNPFRNPRAAILIK.

The protein is Leucine-rich repeat-containing protein 40 (lrrc40) of Danio rerio (Zebrafish).